The chain runs to 478 residues: Solute carrier family 7 member 13 (478 aa).

The Cytoplasmic segment spans residues 1 to 14 (MAMDSKKEIRLKRE). A helical membrane pass occupies residues 15–35 (LGYFWGTNFLIINIIGAGIFV). The Extracellular portion of the chain corresponds to 36–47 (SPKGVLQHSSMN). Residues 48–68 (VGVSLCVWAVCAVLTLTSALC) traverse the membrane as a helical segment. The Cytoplasmic segment spans residues 69–89 (SAEIGITFPYSGAHYYFLKRC). A helical transmembrane segment spans residues 90 to 110 (FGPLVAFLRLWTSLFLGPGLI). The Extracellular portion of the chain corresponds to 111 to 129 (ASQALLLAEYGVQPFYPSC). A helical transmembrane segment spans residues 130 to 150 (SAPILPRKCLALAMLWIVGIL). The Cytoplasmic portion of the chain corresponds to 151–163 (NSRGVKELSWLQT). Residues 164 to 184 (VSSVLKVGILGVISLSGLFLL) traverse the membrane as a helical segment. Residues 185 to 208 (VRGKKENVQRLQNAFDAEFPEVSQ) are Extracellular-facing. The chain crosses the membrane as a helical span at residues 209-229 (LIEAIFQGYFAFSGGGCFTCI). The Cytoplasmic segment spans residues 230 to 242 (AGELKKPSKTIPR). The chain crosses the membrane as a helical span at residues 243 to 263 (CIFTGLPLVTVVYLLANISYL). Residues 264–288 (TVLTPQEMLSSDAVALTWTDRVIPQ) lie on the Extracellular side of the membrane. A helical membrane pass occupies residues 289–309 (FTWTVPFAISASLFINLVINV). The Cytoplasmic segment spans residues 310 to 338 (LETSRVLYIASENGQLPLLFCALNVHSSP). A helical membrane pass occupies residues 339–359 (FIAVLLIISMASILIVLTNLI). Position 360 (aspartate 360) is a topological domain, extracellular. A helical transmembrane segment spans residues 361–381 (LINYLYFVVSIWTALSIIGIL). Residues 382–395 (KLRYQEPNLHRPYK) lie on the Cytoplasmic side of the membrane. Residues 396 to 416 (VFLPFTFIALGITLSLVLIPL) form a helical membrane-spanning segment. The Extracellular portion of the chain corresponds to 417–423 (VKSPKLH). The chain crosses the membrane as a helical span at residues 424–444 (YIYVFLFLLSGLVFYVPLIHF). Over 445 to 478 (KVKFVWFQKLTCYLQLLFNICIPDVSDDHIHEES) the chain is Cytoplasmic.

Belongs to the amino acid-polyamine-organocation (APC) superfamily. As to quaternary structure, disulfide-linked heterodimer composed of the catalytic light subunit SLC7A13 and the heavy subunit SLC3A1. As to expression, expressed in renal tubules in the outer stripe of the outer medulla and medullary ray (at protein level). Detected in male but not in female kidney.

It is found in the apical cell membrane. It catalyses the reaction L-cystine(out) + L-aspartate(in) = L-cystine(in) + L-aspartate(out). The catalysed reaction is L-cystine(out) = L-cystine(in). The enzyme catalyses L-aspartate(in) + L-glutamate(out) = L-aspartate(out) + L-glutamate(in). It carries out the reaction L-aspartate(in) + L-glutamine(out) = L-aspartate(out) + L-glutamine(in). It catalyses the reaction L-aspartate(in) + L-methionine(out) = L-aspartate(out) + L-methionine(in). The catalysed reaction is L-leucine(out) + L-aspartate(in) = L-leucine(in) + L-aspartate(out). The enzyme catalyses L-valine(out) + L-aspartate(in) = L-valine(in) + L-aspartate(out). It carries out the reaction L-aspartate(in) + L-phenylalanine(out) = L-aspartate(out) + L-phenylalanine(in). It catalyses the reaction L-tyrosine(out) + L-aspartate(in) = L-tyrosine(in) + L-aspartate(out). The catalysed reaction is L-tryptophan(out) + L-aspartate(in) = L-tryptophan(in) + L-aspartate(out). Associates with SLC3A1/rBAT to form a functional heterodimeric complex that transports anionic and neutral amino acids across the apical plasma membrane of renal epithelium. Preferentially mediates exchange transport, but can also operate via facilitated diffusion. May act as a major transporter for L-cystine in late proximal tubules, ensuring its reabsorption from the luminal fluid in exchange for cytosolic L-glutamate or L-aspartate. This is Solute carrier family 7 member 13 from Mus musculus (Mouse).